We begin with the raw amino-acid sequence, 834 residues long: Inner nuclear membrane protein SRC1 (834 aa).

A disordered region spans residues 68-292 (DEGIVKMDRP…TANGTGHSTP (225 aa)). Residues 77–86 (PSSSPSIASP) show a composition bias toward low complexity. Phosphoserine occurs at positions 78, 80, and 85. 2 stretches are compositionally biased toward acidic residues: residues 114-127 (VSNDDDDDDDDDDD) and 142-153 (DTDEVDDEEDDV). The span at 154 to 170 (ITSSSNKSDTNDFQQNS) shows a compositional bias: polar residues. Phosphoserine is present on Ser-181. Residues 188–198 (NSKENKIDNKH) are compositionally biased toward basic and acidic residues. Ser-203, Ser-204, and Ser-206 each carry phosphoserine. Polar residues predominate over residues 243–266 (IKNTNRKPVSMDNFNDSLTSSGTE). Ser-301 is subject to Phosphoserine. Residues 307–364 (PQKEVPSTILVPEVEQQEPSQSERTPSLFSSEGSGSESEAPLLPEITTPGPHQPMGNT) form a disordered region. 2 stretches are compositionally biased toward low complexity: residues 317–329 (VPEVEQQEPSQSE) and 336–345 (SSEGSGSESE). The residue at position 394 (Thr-394) is a Phosphothreonine. Phosphoserine is present on Ser-427. Helical transmembrane passes span 455 to 475 (LLALFLFCIFIVIPLLFGLWY) and 708 to 728 (IWLMFLLIVISKVIEIKLKNY).

It localises to the nucleus inner membrane. In terms of biological role, plays a role in sister chromatid separation. This is Inner nuclear membrane protein SRC1 (SRC1) from Saccharomyces cerevisiae (strain ATCC 204508 / S288c) (Baker's yeast).